Reading from the N-terminus, the 444-residue chain is ATP-dependent protease ATPase subunit HslU (444 aa).

ATP is bound by residues I18 and 60–65 (GVGKTE). Residues 143–163 (WGEVENHDSHSSTRQAFRKKL) form a disordered region. D257, E322, and R394 together coordinate ATP.

Belongs to the ClpX chaperone family. HslU subfamily. A double ring-shaped homohexamer of HslV is capped on each side by a ring-shaped HslU homohexamer. The assembly of the HslU/HslV complex is dependent on binding of ATP.

The protein resides in the cytoplasm. Its function is as follows. ATPase subunit of a proteasome-like degradation complex; this subunit has chaperone activity. The binding of ATP and its subsequent hydrolysis by HslU are essential for unfolding of protein substrates subsequently hydrolyzed by HslV. HslU recognizes the N-terminal part of its protein substrates and unfolds these before they are guided to HslV for hydrolysis. The chain is ATP-dependent protease ATPase subunit HslU from Haemophilus influenzae (strain 86-028NP).